The primary structure comprises 465 residues: Histidine--tRNA ligase (465 aa).

The protein belongs to the class-II aminoacyl-tRNA synthetase family. As to quaternary structure, homodimer.

Its subcellular location is the cytoplasm. The enzyme catalyses tRNA(His) + L-histidine + ATP = L-histidyl-tRNA(His) + AMP + diphosphate + H(+). The chain is Histidine--tRNA ligase (hisS) from Pelagibacter ubique (strain HTCC1062).